Here is a 185-residue protein sequence, read N- to C-terminus: Ribosome-recycling factor (185 aa).

The protein belongs to the RRF family.

It localises to the cytoplasm. Functionally, responsible for the release of ribosomes from messenger RNA at the termination of protein biosynthesis. May increase the efficiency of translation by recycling ribosomes from one round of translation to another. This Campylobacter lari (strain RM2100 / D67 / ATCC BAA-1060) protein is Ribosome-recycling factor.